Here is a 162-residue protein sequence, read N- to C-terminus: Photosystem II extrinsic protein V (162 aa).

A signal peptide spans 1–26 (MLKRYMLLAVATVFFAFQVLTSTATA). The heme c site is built by Cys62, Cys65, His66, and His117.

Belongs to the cytochrome c family. PsbV subfamily. PSII is composed of 1 copy each of membrane proteins PsbA, PsbB, PsbC, PsbD, PsbE, PsbF, PsbH, PsbI, PsbJ, PsbK, PsbL, PsbM, PsbT, PsbX, PsbY, PsbZ, Psb30/Ycf12, peripheral proteins PsbO, CyanoQ (PsbQ), PsbU, PsbV and a large number of cofactors. It forms dimeric complexes. It depends on heme c as a cofactor.

Its subcellular location is the cellular thylakoid membrane. In terms of biological role, one of the extrinsic, lumenal subunits of photosystem II (PSII). PSII is a light-driven water plastoquinone oxidoreductase, using light energy to abstract electrons from H(2)O, generating a proton gradient subsequently used for ATP formation. The extrinsic proteins stabilize the structure of photosystem II oxygen-evolving complex (OEC), the ion environment of oxygen evolution and protect the OEC against heat-induced inactivation. Low-potential cytochrome c that plays a role in the OEC of PSII. The chain is Photosystem II extrinsic protein V from Acaryochloris marina (strain MBIC 11017).